The chain runs to 155 residues: Small ribosomal subunit protein uS7 (155 aa).

This sequence belongs to the universal ribosomal protein uS7 family. Part of the 30S ribosomal subunit. Contacts proteins S9 and S11.

In terms of biological role, one of the primary rRNA binding proteins, it binds directly to 16S rRNA where it nucleates assembly of the head domain of the 30S subunit. Is located at the subunit interface close to the decoding center, probably blocks exit of the E-site tRNA. The sequence is that of Small ribosomal subunit protein uS7 from Chlorobium phaeobacteroides (strain DSM 266 / SMG 266 / 2430).